Reading from the N-terminus, the 297-residue chain is Vacuolar protein sorting-associated protein 26 (297 aa).

This sequence belongs to the VPS26 family. In terms of assembly, component of the retromer complex, composed of VPS26, VPS29 and VPS35. As part of the retromer complex, interacts with the sorting receptor SORTLR/sortilin. Interacts with GTPase RAB7.

Its function is as follows. Plays a role in vesicular protein sorting. Component of the membrane-associated retromer complex which is essential in endosome-to-Golgi retrograde transport. This chain is Vacuolar protein sorting-associated protein 26, found in Plasmodium falciparum (isolate 3D7).